Consider the following 476-residue polypeptide: Salicylate biosynthesis isochorismate synthase (476 aa).

The tract at residues 181–202 (RRRPSGPTAGAQGDASAQERRQ) is disordered.

Belongs to the isochorismate synthase family.

The catalysed reaction is chorismate = isochorismate. The protein operates within siderophore biosynthesis; salicylate biosynthesis. Functionally, involved in the conversion of chorismate to salicylate. This chain is Salicylate biosynthesis isochorismate synthase (pchA), found in Pseudomonas aeruginosa (strain ATCC 15692 / DSM 22644 / CIP 104116 / JCM 14847 / LMG 12228 / 1C / PRS 101 / PAO1).